We begin with the raw amino-acid sequence, 39 residues long: GWLRKIGKKIERVGQHTRDATIQVLGIAQQAANVAATAR.

The residue at position 39 (Arg-39) is an Arginine amide.

This sequence belongs to the cecropin family.

It localises to the secreted. Its function is as follows. Sarcotoxins, which are potent bactericidal proteins, are produced in response to injury. They are cytotoxic to both Gram-positive and Gram-negative bacteria. The chain is Sarcotoxin-1C from Sarcophaga peregrina (Flesh fly).